The primary structure comprises 386 residues: IgA receptor (386 aa).

The signal sequence occupies residues 1 to 41; that stretch reads MARKDTNKQYSLRKLKTGTASVAVAVAVLGAGFANQTEVKA. An igA-binding region spans residues 42–152; the sequence is AEIKKPQADS…QKKHQQEQQQ (111 aa). Basic and acidic residues-rich tracts occupy residues 79–88, 97–128, 134–166, 174–201, 209–221, 233–243, and 251–267; these read YADDKEKDPQ, QDLRKREGQYQDKIEELEKERKEKQERQEQLE, EADKHYQEQQKKHQQEQQQLEAEKQKLAKDKQI, LSRDLEASRAAKKELEAEHQKLKEEKQI, LSRDLEASREAKK, EHQKLKEDKQI, and LSRDLEASREAKKKVEA. 2 disordered regions span residues 79–221 and 233–268; these read YADD…EAKK and EHQKLKEDKQISDASRQGLSRDLEASREAKKKVEAD. 3 C repeats span residues 158-192, 193-227, and 235-269; these read QKLAKDKQISDASRQGLSRDLEASRAAKKELEAEH, QKLKEEKQISDASRQGLSRDLEASREAKKKVEADL, and QKLKEDKQISDASRQGLSRDLEASREAKKKVEADL. 4 D repeats span residues 302-307, 308-313, 316-321, and 323-328; these read ARLEAE, AKALKE, AKQAEE, and AKLKGN. The segment at 323-360 is disordered; the sequence is AKLKGNQTPNAKVAPQANRSRSAMTQQKRTLPSTGETA. Over residues 339–359 the composition is skewed to polar residues; it reads ANRSRSAMTQQKRTLPSTGET. The LPXTG sorting signal motif lies at 353-357; the sequence is LPSTG. T356 is modified (pentaglycyl murein peptidoglycan amidated threonine). Residues 357-386 constitute a propeptide, removed by sortase; the sequence is GETANPFFTAAAATVMVSAGMLALKRKEEN.

Belongs to the M protein family.

It localises to the secreted. The protein localises to the cell wall. Binds IgA of both subclasses, and also binds polyclonal IgG weakly. The polypeptide is IgA receptor (arp4) (Streptococcus pyogenes).